A 453-amino-acid polypeptide reads, in one-letter code: Methionine aminopeptidase 2-1 (453 aa).

Residues 1–12 (MGSKTPDGHRQS) are compositionally biased toward basic and acidic residues. Residues 1 to 101 (MGSKTPDGHR…TTPPRVPLST (101 aa)) form a disordered region. Acidic residues predominate over residues 46 to 57 (GEDDDDDDENEE). A compositionally biased stretch (basic residues) spans 67-82 (KKKKRKKSKKKNKKSK). H210 contacts substrate. The a divalent metal cation site is built by D231, D242, and H306. H314 provides a ligand contact to substrate. A divalent metal cation contacts are provided by E339 and E434.

This sequence belongs to the peptidase M24A family. Methionine aminopeptidase eukaryotic type 2 subfamily. It depends on Co(2+) as a cofactor. Requires Zn(2+) as cofactor. Mn(2+) is required as a cofactor. The cofactor is Fe(2+).

Its subcellular location is the cytoplasm. It catalyses the reaction Release of N-terminal amino acids, preferentially methionine, from peptides and arylamides.. Functionally, cotranslationally removes the N-terminal methionine from nascent proteins. The N-terminal methionine is often cleaved when the second residue in the primary sequence is small and uncharged (Met-Ala-, Cys, Gly, Pro, Ser, Thr, or Val). This is Methionine aminopeptidase 2-1 from Aspergillus terreus (strain NIH 2624 / FGSC A1156).